Here is a 199-residue protein sequence, read N- to C-terminus: Putative AgrB-like protein (199 aa).

The next 5 membrane-spanning stretches (helical) occupy residues 43-63 (IIIF…FSFI), 81-101 (YGCL…TRLF), 108-128 (FYIV…PCPN), 139-159 (LKIL…LSPL), and 165-185 (ILIS…KGVI).

It belongs to the AgrB family.

The protein localises to the cell membrane. May be involved in the proteolytic processing of a quorum sensing system signal molecule precursor. This is Putative AgrB-like protein (cfg02) from Clostridium beijerinckii (Clostridium MP).